Here is a 136-residue protein sequence, read N- to C-terminus: Large ribosomal subunit protein bL20c (136 aa).

It belongs to the bacterial ribosomal protein bL20 family.

Its subcellular location is the plastid. It localises to the chloroplast. In terms of biological role, binds directly to 23S ribosomal RNA and is necessary for the in vitro assembly process of the 50S ribosomal subunit. It is not involved in the protein synthesizing functions of that subunit. This Huperzia lucidula (Shining clubmoss) protein is Large ribosomal subunit protein bL20c.